The chain runs to 21 residues: Bibrotoxin (21 aa).

Intrachain disulfides connect cysteine 1/cysteine 15 and cysteine 3/cysteine 11.

This sequence belongs to the endothelin/sarafotoxin family. In terms of tissue distribution, expressed by the venom gland.

Its subcellular location is the secreted. Functionally, vasoconstrictor activity. These toxins cause cardiac arrest probably as a result of coronary vasospasm. May act by displaying agonistic activities towards endothelin-1 and -2 receptors (EDNRA and EDNRB). In Atractaspis bibronii (Bibron's mole viper), this protein is Bibrotoxin.